The primary structure comprises 776 residues: MQHFSRTFLAASIATALFAPYAQAEAILNNSVQEMPTTDQCLVDAEKNDANAEIVIQADNLQAINGDKAIYSGDVEVTQGNKKITAESVTLHQQENIVVAEGNVTFNDGEVKASSSKVTNNMTSETFSLENTEYQFLCQQGRGQAAYIAKTGQAVYELEDGSITSCPADDNAWRLVASSIEVDQNEETATFYHPRFEVLDVPVFYAPYLTLPIGNTRKTGFLFPSVNYGSSDGLEIEVPFYWNIAPNYDLTLTTLYMQQRGVKQDADFRYLSDGWGAGELKGEYLPGDEKYNDEDRWGYQYKHDGIINKQWLVSLDYSQVSDIDYFRDLSSDLGNREDGQLMQQGKVAYRSDFWDMSLQVRDFQILLQDNNQPYRLLPQVKFNFYTPLLGNYLNFDVKSELTQFDIQDASKPNALRAHVEPGLTIPLSTSWATWTTEARLLATYYQQDLDRLTDPTLKSQLDETVARVIPEYRSHARIYLEREAKLFEGYTQSLEPQIQYLYVPEEEQGNIYNYDTTLLQTDYYGLFRSRKYSSIDKIAAANQLSYGASTRFFDDEYKERLNISFGQIYYIDKKTKLTGNQEETSNYSSWAVETDFNYEDFLFYHGGIQYDIDLNAMQLANSTLEYQFTDGFIQGNYRYVTKDYIEDTISFDELDKITRKGISQAGIVGAYNINRHWSASGQYYYDLTEEIDLEWMASLRYQSDCWYIGFTYTNQLVKWRNDVVGGDSNNPVYDTNISVNFGIQGFATKNKAETAAKELDSTDNAITYGRPFYLNN.

The first 24 residues, Met1 to Ala24, serve as a signal peptide directing secretion.

It belongs to the LptD family. As to quaternary structure, component of the lipopolysaccharide transport and assembly complex. Interacts with LptE and LptA.

It localises to the cell outer membrane. Together with LptE, is involved in the assembly of lipopolysaccharide (LPS) at the surface of the outer membrane. This is LPS-assembly protein LptD from Vibrio vulnificus (strain CMCP6).